A 230-amino-acid polypeptide reads, in one-letter code: Small ribosomal subunit protein uS3 (230 aa).

The 69-residue stretch at 39–107 (VREYLFKRLK…PVHINIEEVR (69 aa)) folds into the KH type-2 domain.

It belongs to the universal ribosomal protein uS3 family. As to quaternary structure, part of the 30S ribosomal subunit. Forms a tight complex with proteins S10 and S14.

Binds the lower part of the 30S subunit head. Binds mRNA in the 70S ribosome, positioning it for translation. This is Small ribosomal subunit protein uS3 from Alcanivorax borkumensis (strain ATCC 700651 / DSM 11573 / NCIMB 13689 / SK2).